Consider the following 233-residue polypeptide: Protein TIPIN homolog (233 aa).

Over residues 1 to 14 the composition is skewed to acidic residues; the sequence is MDEMEDFFENDELD. Disordered regions lie at residues 1 to 39 and 134 to 233; these read MDEMEDFFENDELDREPSPMGDEAIEDNSGEGGTRRVVE and GETG…NNDW. Basic and acidic residues-rich tracts occupy residues 163–190 and 197–216; these read DLFKDLPEKEVTTEKAKNSEKSDQKTAE and EEYRMMEEERLREEQEAKEA. The segment covering 217-227 has biased composition (acidic residues); sequence ADEDALMEDFG.

It belongs to the CSM3 family.

The protein resides in the cytoplasm. Its subcellular location is the nucleus. In terms of biological role, required for normal progression of S-phase. Important for cell survival after DNA damage or replication stress. This chain is Protein TIPIN homolog, found in Caenorhabditis elegans.